We begin with the raw amino-acid sequence, 565 residues long: Phosphatidylinositol 4-kinase gamma 4 (565 aa).

Ubiquitin-like domains follow at residues isoleucine 32–arginine 104 and arginine 109–lysine 187. The PI3K/PI4K catalytic domain maps to glycine 257–threonine 542. The segment at serine 263 to glycine 269 is G-loop. Residues threonine 264–valine 270 and lysine 286 contribute to the ATP site. Residues glutamate 291 to lysine 311 form a disordered region. Glutamine 369 to valine 372 contacts ATP. The interval alanine 402–asparagine 410 is catalytic loop. The tract at residues proline 425–glutamate 451 is activation loop. ATP is bound at residue aspartate 427.

It belongs to the PI3/PI4-kinase family. Type II PI4K subfamily. In terms of assembly, interacts with FTIP1 and RPN10. Specifically expressed in the phloem including companion cells.

Its subcellular location is the nucleus. The protein localises to the endoplasmic reticulum. The enzyme catalyses a 1,2-diacyl-sn-glycero-3-phospho-(1D-myo-inositol) + ATP = a 1,2-diacyl-sn-glycero-3-phospho-(1D-myo-inositol 4-phosphate) + ADP + H(+). In terms of biological role, the phosphorylation of phosphatidylinositol (PI) to PI4P is the first committed step in the generation of phosphatidylinositol 4,5-bisphosphate (PIP2), a precursor of the second messenger inositol 1,4,5-trisphosphate (InsP3). Involved in the control of flowering under long day conditions by promoting degradation of FTIP1. Recruits FTIP1 for degradation by the 26S proteasome in leaves, which affects RFT1 transport to the shoot apical meristem (SAM). This chain is Phosphatidylinositol 4-kinase gamma 4, found in Oryza sativa subsp. japonica (Rice).